We begin with the raw amino-acid sequence, 295 residues long: MRIESMNAIQAIAIAILQGATELFPVSSLGHAVVLPALLGWSLPQHSQTFLPFLVFLHLGTAAALLLYFWRDWWALFSGVIGFAPAHHVPQARRIFMLLVVATLPAIVVGGLLEHMLRALFESAPIAAFFLVVNGGLLLFGEKLRGAASPYPQTSDHEVTERRALSTLTVMDAFTIGCWQCAALIPGISRSGATIVGGLLRGIDHEASAHFSFLIALPIILGATVLEVPKLLHADIAPGVFQTAALAAVAAGITAWLSTAFLMRYFRDHDSWALKPFAFYCIIAGLGALAWLHFA.

The next 7 membrane-spanning stretches (helical) occupy residues 12–34 (IAIA…HAVV), 50–70 (FLPF…LYFW), 95–115 (IFML…LLEH), 120–140 (LFES…LLLF), 209–229 (AHFS…LEVP), 243–263 (TAAL…AFLM), and 272–292 (WALK…LAWL).

Belongs to the UppP family.

It localises to the cell inner membrane. The enzyme catalyses di-trans,octa-cis-undecaprenyl diphosphate + H2O = di-trans,octa-cis-undecaprenyl phosphate + phosphate + H(+). In terms of biological role, catalyzes the dephosphorylation of undecaprenyl diphosphate (UPP). Confers resistance to bacitracin. The sequence is that of Undecaprenyl-diphosphatase from Granulibacter bethesdensis (strain ATCC BAA-1260 / CGDNIH1).